The chain runs to 712 residues: Polyribonucleotide nucleotidyltransferase (712 aa).

2 residues coordinate Mg(2+): Asp-487 and Asp-493. The KH domain maps to 554 to 613; sequence PKIITMTINPDKIRDVIGPSGKQINKIIEETGVKIDIEQDGTVFISSINQEMNDKAKKII. One can recognise an S1 motif domain in the interval 623 to 691; the sequence is GEIYEGKVKR…KQGRVNLSRK (69 aa).

This sequence belongs to the polyribonucleotide nucleotidyltransferase family. It depends on Mg(2+) as a cofactor.

It is found in the cytoplasm. It catalyses the reaction RNA(n+1) + phosphate = RNA(n) + a ribonucleoside 5'-diphosphate. Involved in mRNA degradation. Catalyzes the phosphorolysis of single-stranded polyribonucleotides processively in the 3'- to 5'-direction. This is Polyribonucleotide nucleotidyltransferase from Bacillus cereus (strain AH820).